A 108-amino-acid polypeptide reads, in one-letter code: Transmembrane protein 141 (108 aa).

2 consecutive transmembrane segments (helical) span residues 32–52 (MKGV…QMFI) and 58–78 (YPLQ…SYGV).

Belongs to the TMEM141 family.

The protein resides in the membrane. This chain is Transmembrane protein 141 (TMEM141), found in Homo sapiens (Human).